Here is a 261-residue protein sequence, read N- to C-terminus: Acetylglutamate kinase (261 aa).

Substrate-binding positions include 41–42 (GG), Arg63, and Asn157.

Belongs to the acetylglutamate kinase family. ArgB subfamily.

The protein resides in the cytoplasm. The enzyme catalyses N-acetyl-L-glutamate + ATP = N-acetyl-L-glutamyl 5-phosphate + ADP. It functions in the pathway amino-acid biosynthesis; L-arginine biosynthesis; N(2)-acetyl-L-ornithine from L-glutamate: step 2/4. In terms of biological role, catalyzes the ATP-dependent phosphorylation of N-acetyl-L-glutamate. The protein is Acetylglutamate kinase of Koribacter versatilis (strain Ellin345).